A 209-amino-acid chain; its full sequence is Mitochondrial import inner membrane translocase subunit Tim23 (209 aa).

Helical transmembrane passes span phenylalanine 73 to methionine 93, alanine 125 to isoleucine 145, and glycine 172 to tyrosine 194.

This sequence belongs to the Tim17/Tim22/Tim23 family. As to quaternary structure, component of the TIM23 complex at least composed of TIMM23, TIMM17 (TIMM17A or TIMM17B) and TIMM50; within this complex, directly interacts with TIMM50. The complex interacts with the TIMM44 component of the PAM complex and with DNAJC15. Upon mitochondrial depolarization, interacts with PINK1; the interaction is required for PINK1 accumulation at the outer mitochondrial membrane, kinase activation by autophosphorylation and PRKN recruitement to mitochondria.

Its subcellular location is the mitochondrion inner membrane. In terms of biological role, essential component of the TIM23 complex, a complex that mediates the translocation of transit peptide-containing proteins across the mitochondrial inner membrane. Has a role in the activation of stress-induced mitophagy by protecting PINK1 from OMA1-mediated degradation and facilitating its accumulation at the outer mitochondrial membrane in response to depolarization. The polypeptide is Mitochondrial import inner membrane translocase subunit Tim23 (TIMM23) (Bos taurus (Bovine)).